Here is a 322-residue protein sequence, read N- to C-terminus: Cytochrome c biogenesis protein CcsA (322 aa).

8 helical membrane passes run 6-26 (LQLI…FLFF), 45-65 (LIAN…AGYF), 69-89 (NLYE…LFLY), 97-117 (LLDN…HFIL), 144-164 (MISY…LYFL), 230-250 (LITF…VWAN), 265-285 (WALI…IKGW), and 291-311 (AMVA…VNLL).

It belongs to the CcmF/CycK/Ccl1/NrfE/CcsA family. May interact with Ccs1.

The protein resides in the plastid. Its subcellular location is the cyanelle thylakoid membrane. Functionally, required during biogenesis of c-type cytochromes (cytochrome c6 and cytochrome f) at the step of heme attachment. This chain is Cytochrome c biogenesis protein CcsA, found in Cyanophora paradoxa.